The chain runs to 229 residues: MADITLAQLLEAGVHFGHKAYRWNPKMFPYIYTERNNIHILDLVQSAQLLKEANSYLQSAAEKGQTFLFIGTKPQASALIAQEAKRCNSYYVNHRWLGGMLTNWVTLKSRIARLKTLEQEEADQVFNLLPKKEASLRRKELEKLRKNLNGIKDMEKLPDVAIVIDQKREMTAVIECRKLGIPIISILDTNCDPDLVDIPIPGNDDAVGSIKLVLQSLTDSINTGKLTTK.

It belongs to the universal ribosomal protein uS2 family.

It localises to the plastid. The protein localises to the chloroplast. This is Small ribosomal subunit protein uS2c (rps2) from Trieres chinensis (Marine centric diatom).